We begin with the raw amino-acid sequence, 344 residues long: ATPase GET3 (344 aa).

Residue 26 to 33 (KGGVGKTT) coordinates ATP. Aspartate 57 is a catalytic residue. Residues glutamate 239 and asparagine 266 each coordinate ATP. 2 residues coordinate Zn(2+): cysteine 276 and cysteine 279.

This sequence belongs to the arsA ATPase family. As to quaternary structure, homodimer. Component of the Golgi to ER traffic (GET) complex, which is composed of GET1, GET2 and GET3. Within the complex, GET1 and GET2 form a heterotetramer which is stabilized by phosphatidylinositol binding and which binds to the GET3 homodimer. Interacts with the chloride channel protein GEF1.

The protein resides in the cytoplasm. Its subcellular location is the endoplasmic reticulum. The protein localises to the golgi apparatus. Its function is as follows. ATPase required for the post-translational delivery of tail-anchored (TA) proteins to the endoplasmic reticulum. Recognizes and selectively binds the transmembrane domain of TA proteins in the cytosol. This complex then targets to the endoplasmic reticulum by membrane-bound receptors GET1 and GET2, where the tail-anchored protein is released for insertion. This process is regulated by ATP binding and hydrolysis. ATP binding drives the homodimer towards the closed dimer state, facilitating recognition of newly synthesized TA membrane proteins. ATP hydrolysis is required for insertion. Subsequently, the homodimer reverts towards the open dimer state, lowering its affinity for the GET1-GET2 receptor, and returning it to the cytosol to initiate a new round of targeting. Cooperates with the HDEL receptor ERD2 to mediate the ATP-dependent retrieval of resident ER proteins that contain a C-terminal H-D-E-L retention signal from the Golgi to the ER. Involved in low-level resistance to the oxyanions arsenite and arsenate, and in heat tolerance. The polypeptide is ATPase GET3 (Komagataella phaffii (strain GS115 / ATCC 20864) (Yeast)).